The sequence spans 391 residues: MAIINMSDLDLQGKRVLIREDLNVPVSNGVVTSDARLRASLPTIELALANGAAVMVMSHLGRPTEGEYNPEYSMQPVVDYLAKALSCPVRLATDYLDGVDVVVGEVVVFENVRFNVGEGKNNEALSKKMAALCDVYVMDAFGTAHRAQASTHGVGMFAPIACAGPLLAQELDALGKALDNPARPMVAIVGGSKVSTKLTVLESLSGIVDQLVVGGGIANTFIAAAGYNVGKSLYEADLIDEAKRLVANAKSRGADIPVPTDVVVAGEFSPIAAATLKSVSEVADGEMIFDIGPDSAEALAKIIASAGTIVWNGPVGVFEFDQFGEGTKRIAQAIADSKAFSIAGGGDTLAAVDKYGIADKVSYISTGGGAFLEFLEGKELPAVAMLEKRGV.

Residues 21 to 23, Arg-36, 59 to 62, Arg-113, and Arg-146 each bind substrate; these read DLN and HLGR. Residues Lys-197, Glu-319, and 345 to 348 each bind ATP; that span reads GGDT.

The protein belongs to the phosphoglycerate kinase family. As to quaternary structure, monomer.

It localises to the cytoplasm. The enzyme catalyses (2R)-3-phosphoglycerate + ATP = (2R)-3-phospho-glyceroyl phosphate + ADP. It functions in the pathway carbohydrate degradation; glycolysis; pyruvate from D-glyceraldehyde 3-phosphate: step 2/5. In Shewanella baltica (strain OS155 / ATCC BAA-1091), this protein is Phosphoglycerate kinase.